A 461-amino-acid polypeptide reads, in one-letter code: NADP-specific glutamate dehydrogenase (461 aa).

K115 is a catalytic residue.

It belongs to the Glu/Leu/Phe/Val dehydrogenases family. In terms of assembly, homohexamer.

It catalyses the reaction L-glutamate + NADP(+) + H2O = 2-oxoglutarate + NH4(+) + NADPH + H(+). In Penicillium chrysogenum (Penicillium notatum), this protein is NADP-specific glutamate dehydrogenase (GDH).